The following is a 226-amino-acid chain: DNA mismatch repair protein MutH (226 aa).

Belongs to the MutH family.

It localises to the cytoplasm. Sequence-specific endonuclease that cleaves unmethylated GATC sequences. It is involved in DNA mismatch repair. This is DNA mismatch repair protein MutH from Actinobacillus pleuropneumoniae serotype 3 (strain JL03).